The following is a 507-amino-acid chain: ATP synthase subunit alpha, chloroplastic (507 aa).

Residue 170–177 (GDRQTGKT) coordinates ATP.

The protein belongs to the ATPase alpha/beta chains family. As to quaternary structure, F-type ATPases have 2 components, CF(1) - the catalytic core - and CF(0) - the membrane proton channel. CF(1) has five subunits: alpha(3), beta(3), gamma(1), delta(1), epsilon(1). CF(0) has four main subunits: a, b, b' and c.

It localises to the plastid. It is found in the chloroplast thylakoid membrane. It catalyses the reaction ATP + H2O + 4 H(+)(in) = ADP + phosphate + 5 H(+)(out). Functionally, produces ATP from ADP in the presence of a proton gradient across the membrane. The alpha chain is a regulatory subunit. In Solanum bulbocastanum (Wild potato), this protein is ATP synthase subunit alpha, chloroplastic.